The chain runs to 547 residues: Chaperonin GroEL (547 aa).

Residues 30–33 (TLGP), Lys-51, 87–91 (DGTTT), Gly-415, 479–481 (NAA), and Asp-495 each bind ATP.

Belongs to the chaperonin (HSP60) family. Forms a cylinder of 14 subunits composed of two heptameric rings stacked back-to-back. Interacts with the co-chaperonin GroES.

The protein resides in the cytoplasm. The catalysed reaction is ATP + H2O + a folded polypeptide = ADP + phosphate + an unfolded polypeptide.. In terms of biological role, together with its co-chaperonin GroES, plays an essential role in assisting protein folding. The GroEL-GroES system forms a nano-cage that allows encapsulation of the non-native substrate proteins and provides a physical environment optimized to promote and accelerate protein folding. This Bordetella bronchiseptica (strain ATCC BAA-588 / NCTC 13252 / RB50) (Alcaligenes bronchisepticus) protein is Chaperonin GroEL.